The sequence spans 512 residues: MLLRLCIIATLLVSHCVAVSTSPATRDTNGEGLLVQTSSGPIQGFFNQTAPDVRQWLGVPFAEPPVGDLRFSSPVKKQPNGTVNAFALPSSCIQQTSNSSTIYTTYETGFLISGGDSEDCLYLSIWAPRIENIQSQQRPLPVLLYIPGGGFTSGGEASLYKIPDKWVQRTQSHIVVIMNYRVNVFGFPNAEGLSEPNVGLLDQRMAVEWVAANIANFGGDPARIALWGQSAGAASVTAYSYGYPEDPIVAALIADSGAPNIVDNEDYAHTNFTFLASLVGCDGLSSTEELSCMRNVSARKLQTALSTYSGSPSISFTPAVDNKTFFANWTERAITGKVAKIPLITGSNTNEGAGFVSFTPAGPSKSTLFEITESIIACPVAEEVKNRNLANLTTYRYQYAGNFTNISPLPWFGAYHSAELPILFGTHYEYGGPSTQYEWDVSYAMQALWLSFVEDPTRGPVRLAVGNVPANPTNESYFAWPAFEQGSDDLLVFAEGGKVMQLVGAGRIDDYC.

The signal sequence occupies residues 1–18; it reads MLLRLCIIATLLVSHCVA. N-linked (GlcNAc...) asparagine glycosylation is found at Asn47, Asn80, and Asn98. The cysteines at positions 92 and 120 are disulfide-linked. Catalysis depends on Ser230, which acts as the Acyl-ester intermediate. Asn271 is a glycosylation site (N-linked (GlcNAc...) asparagine). A disulfide bridge links Cys281 with Cys292. Asn295, Asn322, and Asn328 each carry an N-linked (GlcNAc...) asparagine glycan. The active-site Charge relay system is the Glu351. N-linked (GlcNAc...) asparagine glycosylation is found at Asn391 and Asn402. The active-site Charge relay system is the His416. Asn474 carries an N-linked (GlcNAc...) asparagine glycan.

The protein belongs to the type-B carboxylesterase/lipase family.

The protein localises to the secreted. It catalyses the reaction chlorogenate + H2O = L-quinate + (E)-caffeate + H(+). Extracellular chlorogenic acid esterase that releases caffeic acid from chlorogenic acid (CGA) contained in natural substrates such as apple marc and coffee pulp. Shows no activity towards 5-O-p-coumaroyl quinic acid, another quinic ester derivative, and rosmarinic acid, another caffeic ester derivative. The protein is Chlorogenic acid esterase of Aspergillus niger.